The sequence spans 942 residues: Isoleucine--tRNA ligase (942 aa).

Positions 58–68 (PYANGDIHIGH) match the 'HIGH' region motif. Position 566 (E566) interacts with L-isoleucyl-5'-AMP. The short motif at 607–611 (KMSKS) is the 'KMSKS' region element. K610 contacts ATP. 4 residues coordinate Zn(2+): C905, C908, C925, and C928.

Belongs to the class-I aminoacyl-tRNA synthetase family. IleS type 1 subfamily. Monomer. Zn(2+) serves as cofactor.

The protein localises to the cytoplasm. It carries out the reaction tRNA(Ile) + L-isoleucine + ATP = L-isoleucyl-tRNA(Ile) + AMP + diphosphate. Catalyzes the attachment of isoleucine to tRNA(Ile). As IleRS can inadvertently accommodate and process structurally similar amino acids such as valine, to avoid such errors it has two additional distinct tRNA(Ile)-dependent editing activities. One activity is designated as 'pretransfer' editing and involves the hydrolysis of activated Val-AMP. The other activity is designated 'posttransfer' editing and involves deacylation of mischarged Val-tRNA(Ile). In Pseudoalteromonas atlantica (strain T6c / ATCC BAA-1087), this protein is Isoleucine--tRNA ligase.